The sequence spans 344 residues: uncharacterized protein (344 aa).

The protein belongs to the MG414/MG415 family.

This is an uncharacterized protein from Mycoplasma pneumoniae (strain ATCC 29342 / M129 / Subtype 1) (Mycoplasmoides pneumoniae).